The following is a 478-amino-acid chain: MIQVLLVTICLAVFPYQGSSIILESGNVNDYEVVYPRKVTALPKGAVQPKYEDAMQYEFKVNGEPVVLHLEKNKGLFSEDYSETHYSPDGREITTYPLVEDHCYYHGRIENDADSTASISACNGLKGHFKLQGELYLIEPLKFPDSEAHAVFKYENVEKEDNAPKMCGVTQNWKSYEPIKKASQLNLTPEQQRFPQRYIELVIVADHRMFTKYNSNLNTIRIWVHEIVNTINVFYRSLHIVVSLTDLEIWSNQDQINVQSAAADTLEAFGEWRETVLLNRISHDNAQLLTAINFQGNIIGRAYTGSMCDPRKSVGIITDHSAINLWVAVTMAHELAHNLGISHDGNQCHCDANSCIMSEELSEELSFEFSDCSLNQYQTYLTDHNPQCMLNEPLGTDTVSRNELLEAGEECDCGSPANPCCDAATCKLRPGAQCAEGLCCDQCRFIKKGKICRRARGDNPDDRCTGQSADCPRNRFHA.

The first 20 residues, 1–20 (MIQVLLVTICLAVFPYQGSS), serve as a signal peptide directing secretion. Residues 21 to 190 (IILESGNVND…KASQLNLTPE (170 aa)) constitute a propeptide that is removed on maturation. In terms of domain architecture, Peptidase M12B spans 197–393 (RYIELVIVAD…HNPQCMLNEP (197 aa)). The Ca(2+) site is built by Glu200 and Asp284. 3 disulfides stabilise this stretch: Cys308/Cys388, Cys348/Cys372, and Cys350/Cys355. Residue His333 coordinates Zn(2+). Glu334 is an active-site residue. Residues His337 and His343 each contribute to the Zn(2+) site. Residues Cys388 and Asn391 each contribute to the Ca(2+) site. Residues 394-405 (LGTDTVSRNELL) constitute a propeptide that is removed on maturation. Residues 414–478 (GSPANPCCDA…ADCPRNRFHA (65 aa)) form the Disintegrin domain. 4 cysteine pairs are disulfide-bonded: Cys420-Cys443, Cys434-Cys440, Cys439-Cys464, and Cys452-Cys471. Residues 456–458 (RGD) carry the Cell attachment site motif.

Belongs to the venom metalloproteinase (M12B) family. P-II subfamily. P-IIe sub-subfamily. As to quaternary structure, heterodimer; disulfide-linked (disintegrin). Requires Zn(2+) as cofactor. In terms of tissue distribution, expressed by the venom gland.

The protein localises to the secreted. Its function is as follows. Impairs hemostasis in the envenomed animal. Functionally, this recombinant protein inhibits ADP-induced platelet aggregation in whole human blood and this effect is concentration-dependent with an IC(50) of 34 nM. In Crotalus viridis viridis (Prairie rattlesnake), this protein is Zinc metalloproteinase/disintegrin VMP-II.